A 548-amino-acid chain; its full sequence is Chaperonin GroEL 1 (548 aa).

Residues 30 to 33, Lys-51, 87 to 91, Gly-415, 479 to 481, and Asp-495 each bind ATP; these read TLGP, DGTTT, and NAA.

This sequence belongs to the chaperonin (HSP60) family. Forms a cylinder of 14 subunits composed of two heptameric rings stacked back-to-back. Interacts with the co-chaperonin GroES.

The protein resides in the cytoplasm. The catalysed reaction is ATP + H2O + a folded polypeptide = ADP + phosphate + an unfolded polypeptide.. Functionally, together with its co-chaperonin GroES, plays an essential role in assisting protein folding. The GroEL-GroES system forms a nano-cage that allows encapsulation of the non-native substrate proteins and provides a physical environment optimized to promote and accelerate protein folding. In Vibrio harveyi (Beneckea harveyi), this protein is Chaperonin GroEL 1.